Here is a 247-residue protein sequence, read N- to C-terminus: DNA repair protein RecO (247 aa).

This sequence belongs to the RecO family.

In terms of biological role, involved in DNA repair and RecF pathway recombination. This Methylocella silvestris (strain DSM 15510 / CIP 108128 / LMG 27833 / NCIMB 13906 / BL2) protein is DNA repair protein RecO.